The following is a 123-amino-acid chain: Immunoglobulin heavy variable 4-34 (123 aa).

A signal peptide spans 1–26; it reads MDLLHKNMKHLWFFLLLVAAPRWVLS. The interval 26-123 is v region; it reads SQVQLQQWGA…ADTAVYYCAR (98 aa). The segment at 27-51 is framework-1; it reads QVQLQQWGAGLLKPSETLSLTCAVY. One can recognise an Ig-like domain in the interval 27-123; sequence QVQLQQWGAG…ADTAVYYCAR (97 aa). A disulfide bond links cysteine 48 and cysteine 121. Residues 52 to 59 form a complementarity-determining-1 region; that stretch reads GGSFSGYY. A framework-2 region spans residues 60-76; it reads WSWIRQPPGKGLEWIGE. The interval 77 to 83 is complementarity-determining-2; that stretch reads INHSGST. N-linked (GlcNAc...) asparagine glycosylation is present at asparagine 78. Positions 84–121 are framework-3; that stretch reads NYNPSLKSRVTISVDTSKNQFSLKLSSVTAADTAVYYC. A complementarity-determining-3 region spans residues 122–123; it reads AR.

In terms of assembly, immunoglobulins are composed of two identical heavy chains and two identical light chains; disulfide-linked.

Its subcellular location is the secreted. It is found in the cell membrane. In terms of biological role, v region of the variable domain of immunoglobulin heavy chains that participates in the antigen recognition. Immunoglobulins, also known as antibodies, are membrane-bound or secreted glycoproteins produced by B lymphocytes. In the recognition phase of humoral immunity, the membrane-bound immunoglobulins serve as receptors which, upon binding of a specific antigen, trigger the clonal expansion and differentiation of B lymphocytes into immunoglobulins-secreting plasma cells. Secreted immunoglobulins mediate the effector phase of humoral immunity, which results in the elimination of bound antigens. The antigen binding site is formed by the variable domain of one heavy chain, together with that of its associated light chain. Thus, each immunoglobulin has two antigen binding sites with remarkable affinity for a particular antigen. The variable domains are assembled by a process called V-(D)-J rearrangement and can then be subjected to somatic hypermutations which, after exposure to antigen and selection, allow affinity maturation for a particular antigen. The polypeptide is Immunoglobulin heavy variable 4-34 (Homo sapiens (Human)).